The primary structure comprises 510 residues: MPYLLEMKDITKQFGVVKAVDNISLTLEAGQVLSLCGENGSGKSTLMKVLCGIYPVGSYQGEIIFSGETLQAKNIRETEQKGIAIIHQELALVKQMSVLENMFLGSEWGRFGIMDYDAMYLRCQRMLAQVKLVVDPHTPVSELGLGQQQLVEIAKALNKQVRLLVLDEPTASLTESETAILLDIIRDLRNHGIACIYISHKLNEVKEISDHICVIRDGRHIGTRPASTMSEDDIIAMMVGRELKELYPHEAHHIGEEILRVENLCAWHPVNRHIRRVDDVSFSLKRGEILGIAGLVGSGRTETVQCLFGVYPGRWQGDIFIKGQAATIRTCQQAMKLGIAMVPEDRKKDGIVPVMGVGANITLAALDDFTGAFSLLDDAKEQSIIVQSLARLKVKTSSSELAIARLSGGNQQKAILAKCLLLNPQILILDEPTRGIDIGAKYEIYKLINQLVQQGIAVIVISSELPEVLGLSDRVLVMHQGRIKADLINHNLTQEKVMEAALRSETHVTS.

2 consecutive ABC transporter domains span residues 5–242 and 259–505; these read LEMK…VGRE and LRVE…LRSE. Residue 37–44 coordinates ATP; the sequence is GENGSGKS.

The protein belongs to the ABC transporter superfamily. Xylose importer (TC 3.A.1.2.4) family. The complex is composed of two ATP-binding proteins (XylG), two transmembrane proteins (XylH) and a solute-binding protein (XylF).

The protein resides in the cell inner membrane. It catalyses the reaction D-xylose(out) + ATP + H2O = D-xylose(in) + ADP + phosphate + H(+). Its function is as follows. Part of the ABC transporter complex XylFGH involved in xylose import. Responsible for energy coupling to the transport system. The chain is Xylose import ATP-binding protein XylG from Yersinia pestis.